We begin with the raw amino-acid sequence, 331 residues long: UPF0324 membrane protein YdhF (331 aa).

Transmembrane regions (helical) follow at residues 2 to 20 (SILP…SYLL), 24 to 46 (IFHS…NLYF), 82 to 104 (LGFS…VLFM), 114 to 136 (VSAL…VEPV), 148 to 170 (IAMV…TWMF), 204 to 226 (TLAT…YFGF), 247 to 269 (SFLP…IHFV), and 308 to 330 (LIYG…SLLI).

Belongs to the UPF0324 family.

Its subcellular location is the cell membrane. The chain is UPF0324 membrane protein YdhF (ydhF) from Lactococcus lactis subsp. lactis (strain IL1403) (Streptococcus lactis).